A 1940-amino-acid polypeptide reads, in one-letter code: Myosin-3 (1940 aa).

One can recognise a Myosin N-terminal SH3-like domain in the interval aspartate 33–proline 82. The Myosin motor domain maps to aspartate 86–aspartate 779. Lysine 130 is modified (N6,N6,N6-trimethyllysine). Glycine 179–threonine 186 is an ATP binding site. Actin-binding regions lie at residues leucine 656–glutamate 678 and lysine 758–glycine 772. The region spanning leucine 782–serine 811 is the IQ domain. Residues leucine 840 to methionine 1933 are a coiled coil.

The protein belongs to the TRAFAC class myosin-kinesin ATPase superfamily. Myosin family. Muscle myosin is a hexameric protein that consists of 2 heavy chain subunits (MHC), 2 alkali light chain subunits (MLC) and 2 regulatory light chain subunits (MLC-2). As to expression, expressed in fetal bone, thymus, placenta, heart, brain, and liver.

The protein resides in the cytoplasm. The protein localises to the myofibril. In terms of biological role, muscle contraction. The protein is Myosin-3 (MYH3) of Homo sapiens (Human).